The following is a 384-amino-acid chain: L-aspartate decarboxylase (384 aa).

At K231 the chain carries N6-(pyridoxal phosphate)lysine.

Belongs to the group II decarboxylase family. MfnA subfamily. Homodimer. Can also form homohexamers. Requires pyridoxal 5'-phosphate as cofactor.

The catalysed reaction is L-aspartate + H(+) = beta-alanine + CO2. It functions in the pathway cofactor biosynthesis; coenzyme A biosynthesis. Its activity is regulated as follows. Inhibited by hydroxylamine. Catalyzes the decarboxylation of L-aspartate to produce beta-alanine. In vitro, can also catalyze the decarboxylation of L-glutamate to produce 4-aminobutanoate, but this activity does not seem necessary in vivo. Shows much higher activity with L-aspartate than with L-glutamate. Does not decarboxylate L-tyrosine. The sequence is that of L-aspartate decarboxylase from Thermococcus kodakarensis (strain ATCC BAA-918 / JCM 12380 / KOD1) (Pyrococcus kodakaraensis (strain KOD1)).